The following is a 413-amino-acid chain: uncharacterized protein (413 aa).

The Response regulatory domain occupies 2–129 (RILIVDDENT…KTTWKLRLME (128 aa)). D54 bears the 4-aspartylphosphate mark.

This is an uncharacterized protein from Sinorhizobium fredii (strain NBRC 101917 / NGR234).